Consider the following 61-residue polypeptide: Protein A40 homolog (61 aa).

The Cytoplasmic portion of the chain corresponds to 1–11 (MTMNKPKTNYA). A helical; Signal-anchor for type II membrane protein membrane pass occupies residues 12–32 (GYACCVICGLIVGIIFTATLL). The Extracellular portion of the chain corresponds to 33-61 (KAVERKLIHTPLIDKTIKDAYIREDCPTD).

This sequence belongs to the poxviridae A40 protein family.

The protein resides in the host membrane. This Homo sapiens (Human) protein is Protein A40 homolog (A45R).